Reading from the N-terminus, the 381-residue chain is Subtilisin NAT (381 aa).

The first 29 residues, 1–29 (MRSKKLWISLLFALTLIFTMAFSNMSAQA), serve as a signal peptide directing secretion. A propeptide spanning residues 30–106 (AGKSSTEKKY…VEEDHIAHEY (77 aa)) is cleaved from the precursor. The Inhibitor I9 domain maps to 38–103 (KYIVGFKQTM…VAYVEEDHIA (66 aa)). Positions 111-380 (PYGISQIKAP…KGLINVQAAA (270 aa)) constitute a Peptidase S8 domain. The active-site Charge relay system is the D138. Residue D147 participates in Ca(2+) binding. The Charge relay system role is filled by H170. Positions 181, 183, 185, 187, 275, 277, 280, and 303 each coordinate Ca(2+). The Charge relay system role is filled by S327.

Belongs to the peptidase S8 family. As to quaternary structure, monomer. The cofactor is Ca(2+).

The protein localises to the secreted. The enzyme catalyses Hydrolysis of proteins with broad specificity for peptide bonds, and a preference for a large uncharged residue in P1. Hydrolyzes peptide amides.. Its activity is regulated as follows. Inhibited by PMSF (phenylmethylsulfonyl fluoride). In terms of biological role, subtilisin is an extracellular alkaline serine protease, it catalyzes the hydrolysis of proteins and peptide amides. Subtilisin NAT also has fibrinolytic activity. This Bacillus subtilis subsp. natto protein is Subtilisin NAT.